Here is a 253-residue protein sequence, read N- to C-terminus: Phosphate import ATP-binding protein PstB 3 (253 aa).

An ABC transporter domain is found at 8–248 (LVINNLDLYY…PQDERTENYI (241 aa)). 40–47 (GPSGCGKS) contacts ATP.

Belongs to the ABC transporter superfamily. Phosphate importer (TC 3.A.1.7) family. In terms of assembly, the complex is composed of two ATP-binding proteins (PstB), two transmembrane proteins (PstC and PstA) and a solute-binding protein (PstS).

The protein localises to the cell membrane. The enzyme catalyses phosphate(out) + ATP + H2O = ADP + 2 phosphate(in) + H(+). Its function is as follows. Part of the ABC transporter complex PstSACB involved in phosphate import. Responsible for energy coupling to the transport system. This is Phosphate import ATP-binding protein PstB 3 from Streptococcus agalactiae serotype III (strain NEM316).